The following is a 443-amino-acid chain: MESLASLYKNHIATLQERTRDALARFKLDALLIHSGELFNVFLDDHPYPFKVNPQFKAWVPVTQVPNCWLLVDGVNKPKLWFYLPVDYWHNVEPLPTSFWTEDVEVIALPKADGIGSLLPAARGNIGYIGLVQERALQLGIEASNINPKGVIDYLHYYRSFKTEYELACMREAQKMAVNGHRAAEEAFRSGMSEFDINIAYLTATGHRDTDVPYSNIVALNEHAAVLHYTKLDHQAPEEMRSFLLDAGAEYNGYAADLTRTWSAKSDNDYAQLVKDVNDEQLALIATMKAGVSYVDYHIQFHQRIAKLLRKHQIITDMSEEAMVENDLTGPFMPHGIGHPLGLQVHDVAGFMQDDSGTHLAAPAKYPYLRCTRILQPGMVLTIEPGIYFIESLLAPWREGQFSKHFNWQKIEALKPFGGIRIEDNVVIHENNVENMTRDLKLA.

Mn(2+) contacts are provided by aspartate 246, aspartate 257, histidine 339, glutamate 384, and glutamate 423.

It belongs to the peptidase M24B family. Bacterial-type prolidase subfamily. Mn(2+) is required as a cofactor.

The catalysed reaction is Xaa-L-Pro dipeptide + H2O = an L-alpha-amino acid + L-proline. Functionally, splits dipeptides with a prolyl residue in the C-terminal position. This Shigella flexneri serotype 5b (strain 8401) protein is Xaa-Pro dipeptidase.